Consider the following 539-residue polypeptide: 4-coumarate--CoA ligase 5 (539 aa).

6 residues coordinate ATP: S185, S186, G187, T188, T189, and K193. (E)-4-coumaroyl-AMP contacts are provided by Y235 and S239. R256 lines the CoA pocket. Residues 258-327 (DTVKMLQLVE…AKLPNAVLGQ (70 aa)) are SBD1. A305, Q327, G328, T332, and M340 together coordinate (E)-4-coumaroyl-AMP. Q327, G328, and T332 together coordinate ATP. The SBD2 stretch occupies residues 328-395 (GYGMTEAGPV…IRGKQIMKGY (68 aa)). Residues D416 and R431 each coordinate ATP. (E)-4-coumaroyl-AMP is bound by residues K433 and K437. Positions 439 and 440 each coordinate CoA. Residue K522 participates in ATP binding.

It belongs to the ATP-dependent AMP-binding enzyme family. Mg(2+) is required as a cofactor. In terms of tissue distribution, expressed in roots, stems, leaf blades, leaf sheaths and spikelets.

It catalyses the reaction (E)-ferulate + ATP + CoA = (E)-feruloyl-CoA + AMP + diphosphate. It carries out the reaction (E)-4-coumarate + ATP + CoA = (E)-4-coumaroyl-CoA + AMP + diphosphate. The enzyme catalyses (E)-sinapate + ATP + CoA = (E)-sinapoyl-CoA + AMP + diphosphate. The catalysed reaction is (E)-caffeate + ATP + CoA = (E)-caffeoyl-CoA + AMP + diphosphate. It catalyses the reaction (E)-cinnamate + ATP + CoA = (E)-cinnamoyl-CoA + AMP + diphosphate. It carries out the reaction (E)-ferulate + ATP + H(+) = (E)-feruloyl-AMP + diphosphate. The enzyme catalyses (E)-feruloyl-AMP + CoA = (E)-feruloyl-CoA + AMP + H(+). The catalysed reaction is (E)-4-coumarate + ATP + H(+) = (E)-4-coumaroyl-AMP + diphosphate. It catalyses the reaction (E)-4-coumaroyl-AMP + CoA = (E)-4-coumaroyl-CoA + AMP + H(+). It carries out the reaction (E)-sinapate + ATP + H(+) = (E)-sinapoyl-AMP + diphosphate. The enzyme catalyses (E)-sinapoyl-AMP + CoA = (E)-sinapoyl-CoA + AMP + H(+). The catalysed reaction is (E)-caffeate + ATP + H(+) = (E)-caffeoyl-AMP + diphosphate. It catalyses the reaction (E)-caffeoyl-AMP + CoA = (E)-caffeoyl-CoA + AMP + H(+). It functions in the pathway phytoalexin biosynthesis; 3,4',5-trihydroxystilbene biosynthesis; 3,4',5-trihydroxystilbene from trans-4-coumarate: step 1/2. Involved in the phenylpropanoid metabolism by mediating the activation of a number of hydroxycinnamates for the biosynthesis of monolignols and other phenolic secondary metabolites. Catalyzes the formation of CoA esters of cinnamate, 4-coumarate, caffeate and ferulate. Is also able to convert sinapate to its corresponding CoA ester, a reaction that is rarely observed in 4CL catalysis. Is more efficient with substrates in the following order: ferulate &gt; 4-coumarate &gt; sinapate &gt; caffeate &gt; cinnamate. Follows a two-step reaction mechanism, wherein the carboxylate substrate first undergoes adenylation by ATP, followed by a thioesterification in the presence of CoA to yield the final CoA thioesters. The sequence is that of 4-coumarate--CoA ligase 5 from Oryza sativa subsp. japonica (Rice).